The following is a 611-amino-acid chain: Actin-interacting protein 1 (611 aa).

WD repeat units follow at residues 57-96 (EHSHQTTVAKTSPSGYYCASGDVHGNVRIWDTTQTTHILK), 145-185 (GQAR…FKST), 188-227 (EHTKFVHSVRYNPDGSLFASTGGDGTIVLYNGVDGTKTGV), 237-276 (AHSGSVFGLTWSPDGTKIASASADKTIKIWNVATLKVEKT), 322-361 (GHNKAITALSSSADGKTLFSADAEGHINSWDISTGISNRV), 446-485 (PISYNSSCVALSNDKQFVAVGGQDSKVHVYKLSGASVSEV), 489-528 (VHPAEITSVAFSNNGAFLVATDQSRKVIPYSVANNFELAH), 534-573 (FHTAKVACVSWSPDNVRLATGSLDNSVIVWNMNKPSDHPI), and 579-610 (HAMSSVNSVIWLNETTIVSAGQDSNIKFWNVP).

This sequence belongs to the WD repeat AIP1 family.

The protein localises to the cytoplasm. Its subcellular location is the cytoskeleton. Induces disassembly of actin filaments in conjunction with ADF/cofilin family proteins. Regulator of actin organization in myofibrils. This chain is Actin-interacting protein 1 (unc-78), found in Caenorhabditis elegans.